A 216-amino-acid chain; its full sequence is Soluble inorganic pyrophosphatase 4 (216 aa).

Ser18 is subject to Phosphoserine. Residues Lys66 and Arg80 each contribute to the substrate site. Tyr88 (proton donor) is an active-site residue. Tyr92 is a substrate binding site. Positions 102, 107, and 139 each coordinate Mg(2+). Residue Tyr176 coordinates substrate.

Belongs to the PPase family. In terms of assembly, monomer. The cofactor is Mg(2+). As to expression, ubiquitous, excepted in pollen. Very low expression in cork, xylem and hypocotyls.

It is found in the cytoplasm. The enzyme catalyses diphosphate + H2O = 2 phosphate + H(+). Its activity is regulated as follows. Inhibited by Zn(2+), Ca(2+), Ba(2+), Fe(2+), Co(2+), Cu(2+), Eu(2+), Eu(3+) and Mn(2+). Its function is as follows. Catalyzes the irreversible hydrolysis of pyrophosphate (PPi) to phosphate. The MgPPi(2-) complex binds to the enzyme only after a free Mg(2+) ion has bound. No activity with glycerol-3-phosphate, glucose-6-phosphate, p-nitrophenylphosphate, ADP, NADP(+), NAD(+),NADH, NADPH or phosphoribosyl pyrophosphate as substrates. The chain is Soluble inorganic pyrophosphatase 4 from Arabidopsis thaliana (Mouse-ear cress).